We begin with the raw amino-acid sequence, 342 residues long: Flotillin-like protein FloA (342 aa).

Transmembrane regions (helical) follow at residues 18-38 (FFIF…GKFI) and 39-59 (SLWF…IIGM).

Belongs to the flotillin-like FloA family. Homooligomerizes.

It is found in the cell membrane. Its subcellular location is the membrane raft. In terms of biological role, found in functional membrane microdomains (FMM) that may be equivalent to eukaryotic membrane rafts. FMMs are highly dynamic and increase in number as cells age. Flotillins are thought to be important factors in membrane fluidity. The polypeptide is Flotillin-like protein FloA (Protochlamydia amoebophila (strain UWE25)).